A 321-amino-acid chain; its full sequence is Tetraacyldisaccharide 4'-kinase (321 aa).

S54–T61 is an ATP binding site.

This sequence belongs to the LpxK family.

The catalysed reaction is a lipid A disaccharide + ATP = a lipid IVA + ADP + H(+). Its pathway is glycolipid biosynthesis; lipid IV(A) biosynthesis; lipid IV(A) from (3R)-3-hydroxytetradecanoyl-[acyl-carrier-protein] and UDP-N-acetyl-alpha-D-glucosamine: step 6/6. Its function is as follows. Transfers the gamma-phosphate of ATP to the 4'-position of a tetraacyldisaccharide 1-phosphate intermediate (termed DS-1-P) to form tetraacyldisaccharide 1,4'-bis-phosphate (lipid IVA). This is Tetraacyldisaccharide 4'-kinase from Rickettsia peacockii (strain Rustic).